Reading from the N-terminus, the 93-residue chain is RNA-binding protein Hfq (93 aa).

A Sm domain is found at 11–71 (DVFLNHVRKS…ISTVMPGAPI (61 aa)).

It belongs to the Hfq family. As to quaternary structure, homohexamer.

Functionally, RNA chaperone that binds small regulatory RNA (sRNAs) and mRNAs to facilitate mRNA translational regulation in response to envelope stress, environmental stress and changes in metabolite concentrations. Also binds with high specificity to tRNAs. The polypeptide is RNA-binding protein Hfq (Granulibacter bethesdensis (strain ATCC BAA-1260 / CGDNIH1)).